The chain runs to 393 residues: Pre-mRNA splicing factor SR-like 1 (393 aa).

Residues 173–393 (MNLPTKPSGS…VIKLGGSSWR (221 aa)) form a disordered region. Positions 249–312 (QSRDYYSDRD…RNDYEDDRSR (64 aa)) are enriched in basic and acidic residues. The Nuclear localization signal signature appears at 301–308 (SRRNDYED). Residues 313 to 325 (HDRRSRSRSRSRS) are compositionally biased toward basic residues. Basic and acidic residues-rich tracts occupy residues 329-346 (QIER…KEKS) and 356-385 (KLKD…EEVI).

This sequence belongs to the PRP38 family. In terms of processing, phosphorylated. In terms of tissue distribution, mostly expressed in siliques and leaves, also present in seedlings, flowers and stems, and, at low levels, in roots.

The protein localises to the nucleus. May be required for pre-mRNA splicing. Confers salt tolerance to LiCl and NaCl. The sequence is that of Pre-mRNA splicing factor SR-like 1 from Arabidopsis thaliana (Mouse-ear cress).